We begin with the raw amino-acid sequence, 556 residues long: Formate--tetrahydrofolate ligase (556 aa).

65-72 is an ATP binding site; it reads TPAGEGKT.

Belongs to the formate--tetrahydrofolate ligase family.

It catalyses the reaction (6S)-5,6,7,8-tetrahydrofolate + formate + ATP = (6R)-10-formyltetrahydrofolate + ADP + phosphate. Its pathway is one-carbon metabolism; tetrahydrofolate interconversion. The chain is Formate--tetrahydrofolate ligase from Carboxydothermus hydrogenoformans (strain ATCC BAA-161 / DSM 6008 / Z-2901).